A 365-amino-acid polypeptide reads, in one-letter code: Cobalt-precorrin-5B C(1)-methyltransferase (365 aa).

Belongs to the CbiD family.

The enzyme catalyses Co-precorrin-5B + S-adenosyl-L-methionine = Co-precorrin-6A + S-adenosyl-L-homocysteine. Its pathway is cofactor biosynthesis; adenosylcobalamin biosynthesis; cob(II)yrinate a,c-diamide from sirohydrochlorin (anaerobic route): step 6/10. Functionally, catalyzes the methylation of C-1 in cobalt-precorrin-5B to form cobalt-precorrin-6A. In Pseudomonas fluorescens (strain Pf0-1), this protein is Cobalt-precorrin-5B C(1)-methyltransferase.